A 795-amino-acid polypeptide reads, in one-letter code: MAVLLLLLRALRRGPGPGPRPLWGPGPAWSPGFPARPGRGRPYMASRPPGDLAEAGGRALQSLQLRLLTPTFEGINGLLLKQHLVQNPVRLWQLLGGTFYFNTSRLKQKNKEKDKSKGKAPEEDEEERRRRERDDQMYRERLRTLLVIAVVMSLLNALSTSGGSISWNDFVHEMLAKGEVQRVQVVPESDVVEVYLHPGAVVFGRPRLALMYRMQVANIDKFEEKLRAAEDELNIEAKDRIPVSYKRTGFFGNALYSVGMTAVGLAILWYVFRLAGMTGREGGFSAFNQLKMARFTIVDGKMGKGVSFKDVAGMHEAKLEVREFVDYLKSPERFLQLGAKVPKGALLLGPPGCGKTLLAKAVATEAQVPFLAMAGPEFVEVIGGLGAARVRSLFKEARARAPCIVYIDEIDAVGKKRSTTMSGFSNTEEEQTLNQLLVEMDGMGTTDHVIVLASTNRADILDGALMRPGRLDRHVFIDLPTLQERREIFEQHLKSLKLTQSSTFYSQRLAELTPGFSGADIANICNEAALHAAREGHTSVHTLNFEYAVERVLAGTAKKSKILSKEEQKVVAFHESGHALVGWMLEHTEAVMKVSITPRTNAALGFAQMLPRDQHLFTKEQLFERMCMALGGRASEALSFNEVTSGAQDDLRKVTRIAYSMVKQFGMAPGIGPISFPEAQEGLMGIGRRPFSQGLQQMMDHEARLLVAKAYRHTEKVLQDNLDKLQALANALLEKEVINYEDIEALIGPPPHGPKKMIAPQRWIDAQREKQDLGEEETEETQQPPLGGEEPTWPK.

A mitochondrion-targeting transit peptide spans 1–43; the sequence is MAVLLLLLRALRRGPGPGPRPLWGPGPAWSPGFPARPGRGRPY. The propeptide at 44 to 105 is removed in mature form; the sequence is MASRPPGDLA…GGTFYFNTSR (62 aa). The Mitochondrial matrix segment spans residues 106-144; sequence LKQKNKEKDKSKGKAPEEDEEERRRRERDDQMYRERLRT. The disordered stretch occupies residues 108-133; sequence QKNKEKDKSKGKAPEEDEEERRRRER. Basic and acidic residues predominate over residues 109–133; sequence KNKEKDKSKGKAPEEDEEERRRRER. Residues 145–165 form a helical membrane-spanning segment; sequence LLVIAVVMSLLNALSTSGGSI. At 166-248 the chain is on the mitochondrial intermembrane side; that stretch reads SWNDFVHEML…DRIPVSYKRT (83 aa). The chain crosses the membrane as a helical span at residues 249–269; that stretch reads GFFGNALYSVGMTAVGLAILW. At 270 to 795 the chain is on the mitochondrial matrix side; sequence YVFRLAGMTG…LGGEEPTWPK (526 aa). Positions 312, 352, 353, 354, 355, 356, and 357 each coordinate ATP. A 3'-nitrotyrosine modification is found at Tyr505. His574 contributes to the Zn(2+) binding site. Glu575 is an active-site residue. 2 residues coordinate Zn(2+): His578 and Asp650. The segment at 701–795 is interaction with PPIF; it reads HEARLLVAKA…LGGEEPTWPK (95 aa). A disordered region spans residues 751–795; sequence PHGPKKMIAPQRWIDAQREKQDLGEEETEETQQPPLGGEEPTWPK.

In the N-terminal section; belongs to the AAA ATPase family. It in the C-terminal section; belongs to the peptidase M41 family. Forms heterooligomers with AFG3L2; the m-AAA protease is composed of heterohexamers of AFG3L2 and SPG7. Component of the mitochondrial permeability transition pore complex (mPTPC), at least composed of SPG7, VDAC1 and PPIF. Interacts with MAIP1. It depends on Zn(2+) as a cofactor. Upon import into the mitochondrion, the N-terminal transit peptide is cleaved by the mitochondrial-processing peptidase (MPP) to generate an intermediate form which undergoes a second proteolytic cleavage mediated by proteases AFG3L2 removing an additional N-terminal fragment to generate the proteolytically active mature form. As to expression, ubiquitous.

The protein resides in the mitochondrion inner membrane. The catalysed reaction is ATP + H2O = ADP + phosphate + H(+). Catalytic component of the m-AAA protease, a protease that plays a key role in proteostasis of inner mitochondrial membrane proteins, and which is essential for axonal and neuron development. SPG7 possesses both ATPase and protease activities: the ATPase activity is required to unfold substrates, threading them into the internal proteolytic cavity for hydrolysis into small peptide fragments. The m-AAA protease exerts a dual role in the mitochondrial inner membrane: it mediates the processing of specific regulatory proteins and ensures protein quality control by degrading misfolded polypeptides. Mediates protein maturation of the mitochondrial ribosomal subunit MRPL32/bL32m by catalyzing the cleavage of the presequence of MRPL32/bL32m prior to assembly into the mitochondrial ribosome. Acts as a regulator of calcium in neurons by mediating degradation of SMDT1/EMRE before its assembly with the uniporter complex, limiting the availability of SMDT1/EMRE for MCU assembly and promoting efficient assembly of gatekeeper subunits with MCU. Also regulates mitochondrial calcium by catalyzing degradation of MCU. Plays a role in the formation and regulation of the mitochondrial permeability transition pore (mPTP) and its proteolytic activity is dispensable for this function. The sequence is that of Mitochondrial inner membrane m-AAA protease component paraplegin from Homo sapiens (Human).